A 196-amino-acid polypeptide reads, in one-letter code: NADH-quinone oxidoreductase subunit I (196 aa).

4Fe-4S ferredoxin-type domains follow at residues 54 to 84 (LNRWPDGLEKCVGCELCAWACPADAIYVEGA) and 104 to 133 (RVYQINYLRCILCGLCIEACPTRALTMTNE). Residues Cys-64, Cys-67, Cys-70, Cys-74, Cys-113, Cys-116, Cys-119, and Cys-123 each contribute to the [4Fe-4S] cluster site.

This sequence belongs to the complex I 23 kDa subunit family. As to quaternary structure, NDH-1 is composed of 14 different subunits. Subunits NuoA, H, J, K, L, M, N constitute the membrane sector of the complex. [4Fe-4S] cluster serves as cofactor.

Its subcellular location is the cell membrane. The enzyme catalyses a quinone + NADH + 5 H(+)(in) = a quinol + NAD(+) + 4 H(+)(out). Functionally, NDH-1 shuttles electrons from NADH, via FMN and iron-sulfur (Fe-S) centers, to quinones in the respiratory chain. The immediate electron acceptor for the enzyme in this species is believed to be ubiquinone. Couples the redox reaction to proton translocation (for every two electrons transferred, four hydrogen ions are translocated across the cytoplasmic membrane), and thus conserves the redox energy in a proton gradient. This Nocardioides sp. (strain ATCC BAA-499 / JS614) protein is NADH-quinone oxidoreductase subunit I.